A 2167-amino-acid chain; its full sequence is RNA editing associated helicase 2 (2167 aa).

The transit peptide at 1–30 (MRAIRLTVACRYLGPFRSVTLSPVVLPVRL) directs the protein to the mitochondrion. Disordered regions lie at residues 503 to 593 (RARG…DEAT) and 937 to 969 (ENAT…PTNV). A compositionally biased stretch (low complexity) spans 532-541 (SSTQTPSSST). A DRBM domain is found at 1024-1095 (DAKTVLQRYC…AMHALALLRR (72 aa)). The Helicase ATP-binding domain occupies 1348–1513 (LRAISSNQIV…FGNAPIINVE (166 aa)). 1361 to 1368 (GTTGCGKT) contacts ATP. The Important for binding to gRNA motif lies at 1366-1367 (GK). Residues 1460 to 1463 (DEIH) carry the DEAH box motif. The 178-residue stretch at 1585 to 1762 (AIDHAVRSLD…SLCLQILALD (178 aa)) folds into the Helicase C-terminal domain. Residues 2132–2167 (IIEPCTEPKGGSSEAEKTHVNSSHTPTTSAEAGGDS) form a disordered region. The segment covering 2151–2161 (VNSSHTPTTSA) has biased composition (polar residues).

The protein belongs to the DEAD box helicase family. DEAH subfamily. Component of the REH2-associated complex (REH2C) composed of helicase REH2, associated factors H2F1 and H2F2, and mRNAs at various editing stages; the formation of the complex is RNA-independent. Within the complex, interacts with H2F1; the interaction is direct. Interacts transiently, in a RNA-dependent manner, with various editing complexes including the RNA editing core (RECC) complex, the gRNA-binding (GRBC) complex (also known as the MRB1 complex) and the RNA editing mediator (REMC) complex. Interacts with GAP1/GRBC2 via RNA forming a variant of the GRBC complex known as REH2-GRBC complex. Interacts with mitochondrial ribosomes.

It is found in the mitochondrion. The catalysed reaction is ATP + H2O = ADP + phosphate + H(+). Functionally, ATP-dependent RNA helicase that unwinds RNA in a 3' to 5' direction and that plays an important role in mitochondrial mRNA editing, a process involving the addition and deletion of uridine (U) nucleotides in the pre-mRNA. As part of the RET2-containing gRNA-binding (RET2-GRBC) complex, acts as a scaffold for the assembly of mRNA-gRNA hybrids and the recruitment of the RNA editing core (RECC) complex. Regulates several steps of mRNA editing by the MRBC3010/GRBC6 containing gRNA-binding (MRBC3010-GRBC) complex including loading of unedited mRNA, editing in the first sequence block and subsequent editing progression across multiple sequence blocks. Also, regulates the RNA substrate content of the MRBC3010-GRBC complex as well as the association of this complex with mitoribosomes. The chain is RNA editing associated helicase 2 from Trypanosoma brucei brucei (strain 927/4 GUTat10.1).